The primary structure comprises 410 residues: MTQTHPIHVFSEIGKLKKVMLHRPGKEIENLMPDYLERLLFDDIPFLEDAQKEHDAFAQALRNEGVEVLYLENLAAESLTNQEIREQFIDEYIGEANVRGRATKKAIRELLLNIKDNKELIEKTMAGIQKSELPEIPSSEKGLTDLVESNYPFAIDPMPNLYFTRDPFATIGNGVSLNHMFSETRNRETLYGKYIFTHHPEYGGKVPMVYDREETTRIEGGDELVLSKDVLAVGISQRTDAASIEKLLVNIFKQNLGFKKVLAFEFANNRKFMHLDTVFTMVDYDKFTIHPEIEGDLRVYSVTYENQDLHIEEEKGDLAVLLAKNLGVEKVELIRCGGDNLVAAGREQWNDGSNTLTIAPGVVVVYNRNTITNAILESKGLKLIKINGSELVRGRGGPRCMSMPFEREDL.

Residue Cys400 is the Amidino-cysteine intermediate of the active site.

The protein belongs to the arginine deiminase family.

Its subcellular location is the cytoplasm. It carries out the reaction L-arginine + H2O = L-citrulline + NH4(+). Its pathway is amino-acid degradation; L-arginine degradation via ADI pathway; carbamoyl phosphate from L-arginine: step 1/2. In Streptococcus agalactiae serotype Ia (strain ATCC 27591 / A909 / CDC SS700), this protein is Arginine deiminase.